The primary structure comprises 192 residues: UPF0301 protein Bmul_2524/BMULJ_00714 (192 aa).

The protein belongs to the UPF0301 (AlgH) family.

The protein is UPF0301 protein Bmul_2524/BMULJ_00714 of Burkholderia multivorans (strain ATCC 17616 / 249).